We begin with the raw amino-acid sequence, 220 residues long: GTP cyclohydrolase 1 (220 aa).

Zn(2+)-binding residues include Cys-109, His-112, and Cys-180.

Belongs to the GTP cyclohydrolase I family. In terms of assembly, toroid-shaped homodecamer, composed of two pentamers of five dimers.

The enzyme catalyses GTP + H2O = 7,8-dihydroneopterin 3'-triphosphate + formate + H(+). Its pathway is cofactor biosynthesis; 7,8-dihydroneopterin triphosphate biosynthesis; 7,8-dihydroneopterin triphosphate from GTP: step 1/1. This is GTP cyclohydrolase 1 from Yersinia enterocolitica serotype O:8 / biotype 1B (strain NCTC 13174 / 8081).